The primary structure comprises 958 residues: SLIT and NTRK-like protein 5 (958 aa).

Positions 1 to 40 (MHTCCPPVTLEQDLHRKMHSWMLQTLAFAVTSLVLSCAET) are cleaved as a signal peptide. Topologically, residues 41 to 664 (IDYYGEICDN…GGGASSVPLS (624 aa)) are extracellular. LRR repeat units follow at residues 82–103 (PIYH…EFVN), 106–127 (GASI…AFHG), 130–151 (GLRR…TFLG), 154–175 (NLEY…AFGK), 178–199 (LLQV…LFRF), and 201–222 (PLTH…GLLQ). N-linked (GlcNAc...) asparagine glycosylation occurs at asparagine 103. In terms of domain architecture, LRRCT 1 spans 235–286 (NPWNCSCELISLKDWLDSISYSALVGDVVCETPFRLHGRDLDEVSKQELCPR). Residues 317–358 (ATSSSAVYKPPLKPPKGTRQPNKPRVRPTSRQPSKDLGYSNY) are disordered. Residues 365 to 407 (QTKSPVPLECPTACSCNLQISDLGLNVNCQERKIESIAELQPK) form the LRRNT domain. LRR repeat units lie at residues 410 to 431 (NPKK…DFLE), 434 to 455 (GLDL…AFGD), 458 to 479 (NLRR…LFYG), 482 to 503 (SLQY…TFDP), 506 to 527 (NLQL…VFSG), and 529 to 550 (TLLR…GVLD). The region spanning 563 to 614 (NPWDCTCDIVGMKLWVEQLKVGVLVDEVICKAPKKFAETDMRSIKSELLCPD) is the LRRCT 2 domain. N-linked (GlcNAc...) asparagine glycosylation occurs at asparagine 644. A helical membrane pass occupies residues 665–685 (VLILSLLLVFIMSVFVAAGLF). At 686-958 (VLVMKRRKKN…LEKQTTFSQF (273 aa)) the chain is on the cytoplasmic side. Positions 789-844 (NHHLQQQQQPPPPPQQPQQQPPPQLQLQPGEEERRESHHLRSPAYSVSTIEPREDL) are disordered. Residues 797-812 (QPPPPPQQPQQQPPPQ) are compositionally biased toward pro residues.

Belongs to the SLITRK family. As to expression, expressed predominantly in the cerebral cortex of the brain but also at low levels in the spinal cord and medulla.

The protein resides in the membrane. Functionally, suppresses neurite outgrowth. This Homo sapiens (Human) protein is SLIT and NTRK-like protein 5 (SLITRK5).